Reading from the N-terminus, the 437-residue chain is Replication factor C large subunit (437 aa).

48–55 (GPPGVGKT) lines the ATP pocket. The interval 410–437 (TQASKPTSEEKAEKSKKYYPKRSSSRKT) is disordered. The span at 416-425 (TSEEKAEKSK) shows a compositional bias: basic and acidic residues. The segment covering 426 to 437 (KYYPKRSSSRKT) has biased composition (basic residues).

This sequence belongs to the activator 1 small subunits family. RfcL subfamily. In terms of assembly, heteromultimer composed of small subunits (RfcS) and large subunits (RfcL).

Functionally, part of the RFC clamp loader complex which loads the PCNA sliding clamp onto DNA. The polypeptide is Replication factor C large subunit (Sulfolobus acidocaldarius (strain ATCC 33909 / DSM 639 / JCM 8929 / NBRC 15157 / NCIMB 11770)).